We begin with the raw amino-acid sequence, 202 residues long: Protein GrpE (202 aa).

The span at 21-37 (EELKNEEVKEETHEHEH) shows a compositional bias: basic and acidic residues. The segment at 21–52 (EELKNEEVKEETHEHEHKHGGHTCCGKHGHKH) is disordered. A compositionally biased stretch (basic residues) spans 38-51 (KHGGHTCCGKHGHK).

This sequence belongs to the GrpE family. In terms of assembly, homodimer.

The protein resides in the cytoplasm. Its function is as follows. Participates actively in the response to hyperosmotic and heat shock by preventing the aggregation of stress-denatured proteins, in association with DnaK and GrpE. It is the nucleotide exchange factor for DnaK and may function as a thermosensor. Unfolded proteins bind initially to DnaJ; upon interaction with the DnaJ-bound protein, DnaK hydrolyzes its bound ATP, resulting in the formation of a stable complex. GrpE releases ADP from DnaK; ATP binding to DnaK triggers the release of the substrate protein, thus completing the reaction cycle. Several rounds of ATP-dependent interactions between DnaJ, DnaK and GrpE are required for fully efficient folding. In Fusobacterium nucleatum subsp. polymorphum (Fusobacterium polymorphum), this protein is Protein GrpE.